The chain runs to 572 residues: Proline--tRNA ligase (572 aa).

The protein belongs to the class-II aminoacyl-tRNA synthetase family. ProS type 1 subfamily. In terms of assembly, homodimer.

The protein resides in the cytoplasm. The catalysed reaction is tRNA(Pro) + L-proline + ATP = L-prolyl-tRNA(Pro) + AMP + diphosphate. Its function is as follows. Catalyzes the attachment of proline to tRNA(Pro) in a two-step reaction: proline is first activated by ATP to form Pro-AMP and then transferred to the acceptor end of tRNA(Pro). As ProRS can inadvertently accommodate and process non-cognate amino acids such as alanine and cysteine, to avoid such errors it has two additional distinct editing activities against alanine. One activity is designated as 'pretransfer' editing and involves the tRNA(Pro)-independent hydrolysis of activated Ala-AMP. The other activity is designated 'posttransfer' editing and involves deacylation of mischarged Ala-tRNA(Pro). The misacylated Cys-tRNA(Pro) is not edited by ProRS. The protein is Proline--tRNA ligase of Citrobacter koseri (strain ATCC BAA-895 / CDC 4225-83 / SGSC4696).